Consider the following 231-residue polypeptide: Putative S-adenosylmethionine-dependent methyltransferase RcsF (231 aa).

The 138-residue stretch at 5–142 folds into the TsaA-like domain; sequence VSPIGYIRSC…YVPYADAVAD (138 aa). S-adenosyl-L-methionine-binding positions include 22-24, 63-64, R91, and 122-125; these read PRQ, HQ, and LDGT.

This sequence belongs to the tRNA methyltransferase O family.

In Pseudomonas aeruginosa (strain ATCC 15692 / DSM 22644 / CIP 104116 / JCM 14847 / LMG 12228 / 1C / PRS 101 / PAO1), this protein is Putative S-adenosylmethionine-dependent methyltransferase RcsF (rcsF).